The sequence spans 604 residues: Glutamine--fructose-6-phosphate aminotransferase [isomerizing] (604 aa).

Cys2 acts as the Nucleophile; for GATase activity in catalysis. A Glutamine amidotransferase type-2 domain is found at 2–219 (CGIMGAVSER…EGDSACVTTQ (218 aa)). SIS domains lie at 279-427 (LRAS…DNRA) and 454-594 (LASL…VDQP). Catalysis depends on Lys599, which acts as the For Fru-6P isomerization activity.

Homodimer.

Its subcellular location is the cytoplasm. The catalysed reaction is D-fructose 6-phosphate + L-glutamine = D-glucosamine 6-phosphate + L-glutamate. Catalyzes the first step in hexosamine metabolism, converting fructose-6P into glucosamine-6P using glutamine as a nitrogen source. The protein is Glutamine--fructose-6-phosphate aminotransferase [isomerizing] of Legionella pneumophila (strain Paris).